The primary structure comprises 577 residues: Arginine--tRNA ligase (577 aa).

The 'HIGH' region motif lies at Pro-122–His-132.

It belongs to the class-I aminoacyl-tRNA synthetase family. Monomer.

It is found in the cytoplasm. It carries out the reaction tRNA(Arg) + L-arginine + ATP = L-arginyl-tRNA(Arg) + AMP + diphosphate. This is Arginine--tRNA ligase from Histophilus somni (strain 129Pt) (Haemophilus somnus).